We begin with the raw amino-acid sequence, 111 residues long: Small ribosomal subunit protein uS10 (111 aa).

Belongs to the universal ribosomal protein uS10 family. In terms of assembly, part of the 30S ribosomal subunit.

Functionally, involved in the binding of tRNA to the ribosomes. This is Small ribosomal subunit protein uS10 from Protochlamydia amoebophila (strain UWE25).